Consider the following 482-residue polypeptide: G patch domain-containing protein 2-like (482 aa).

Phosphoserine is present on residues serine 31, serine 86, and serine 88. Threonine 91 carries the post-translational modification Phosphothreonine. Residue lysine 196 forms a Glycyl lysine isopeptide (Lys-Gly) (interchain with G-Cter in SUMO2) linkage. Residues 198 to 214 show a composition bias toward basic and acidic residues; the sequence is GRKERMECETDEQKQGS. 2 disordered regions span residues 198-247 and 413-482; these read GRKE…DDEQ and KRKR…PGYS. The segment covering 220 to 230 has biased composition (low complexity); that stretch reads ECETSSVCSSS. Residues 439 to 450 show a composition bias toward polar residues; that stretch reads TPASQAPKSPSS. Phosphoserine occurs at positions 447 and 449. The segment covering 456-469 has biased composition (low complexity); that stretch reads TSAAEKATDATTAT.

This chain is G patch domain-containing protein 2-like (GPATCH2L), found in Homo sapiens (Human).